We begin with the raw amino-acid sequence, 93 residues long: Putative pterin-4-alpha-carbinolamine dehydratase (93 aa).

This sequence belongs to the pterin-4-alpha-carbinolamine dehydratase family.

The catalysed reaction is (4aS,6R)-4a-hydroxy-L-erythro-5,6,7,8-tetrahydrobiopterin = (6R)-L-erythro-6,7-dihydrobiopterin + H2O. The protein is Putative pterin-4-alpha-carbinolamine dehydratase of Chloroflexus aurantiacus (strain ATCC 29366 / DSM 635 / J-10-fl).